The sequence spans 121 residues: MSVSFLIFLPVLGLPWGVLSQVQLQQSGPGLVKPSQTLSLTCAISGDSVSSNSAAWNWIRQSPSRGLEWLGRTYYRSKWYNDYAVSVKSRITINPDTSKNQFSLQLNSVTPEDTAVYYCAR.

The signal sequence occupies residues 1–20; sequence MSVSFLIFLPVLGLPWGVLS. The framework-1 stretch occupies residues 21–45; it reads QVQLQQSGPGLVKPSQTLSLTCAIS. Residues 21 to 121 form the Ig-like domain; it reads QVQLQQSGPG…EDTAVYYCAR (101 aa). Cys42 and Cys119 are joined by a disulfide. The complementarity-determining-1 stretch occupies residues 46-55; that stretch reads GDSVSSNSAA. Residues 56 to 72 form a framework-2 region; that stretch reads WNWIRQSPSRGLEWLGR. Residues 73–81 form a complementarity-determining-2 region; sequence TYYRSKWYN. The interval 82–119 is framework-3; sequence DYAVSVKSRITINPDTSKNQFSLQLNSVTPEDTAVYYC. Positions 120–121 are complementarity-determining-3; sequence AR.

As to quaternary structure, immunoglobulins are composed of two identical heavy chains and two identical light chains; disulfide-linked.

The protein resides in the secreted. The protein localises to the cell membrane. In terms of biological role, v region of the variable domain of immunoglobulin heavy chains that participates in the antigen recognition. Immunoglobulins, also known as antibodies, are membrane-bound or secreted glycoproteins produced by B lymphocytes. In the recognition phase of humoral immunity, the membrane-bound immunoglobulins serve as receptors which, upon binding of a specific antigen, trigger the clonal expansion and differentiation of B lymphocytes into immunoglobulins-secreting plasma cells. Secreted immunoglobulins mediate the effector phase of humoral immunity, which results in the elimination of bound antigens. The antigen binding site is formed by the variable domain of one heavy chain, together with that of its associated light chain. Thus, each immunoglobulin has two antigen binding sites with remarkable affinity for a particular antigen. The variable domains are assembled by a process called V-(D)-J rearrangement and can then be subjected to somatic hypermutations which, after exposure to antigen and selection, allow affinity maturation for a particular antigen. In Homo sapiens (Human), this protein is Immunoglobulin heavy variable 6-1.